A 99-amino-acid chain; its full sequence is NADH-ubiquinone oxidoreductase chain 4L (99 aa).

A run of 3 helical transmembrane segments spans residues 4–24, 29–49, and 63–83; these read MFLMFYLSMIMFLFGCMVFVS, LLSTLLSLEYMVLSLFIFLFF, and FFLTFCVCEGVLGLSILVSMI.

Belongs to the complex I subunit 4L family.

Its subcellular location is the mitochondrion membrane. It catalyses the reaction a ubiquinone + NADH + 5 H(+)(in) = a ubiquinol + NAD(+) + 4 H(+)(out). Core subunit of the mitochondrial membrane respiratory chain NADH dehydrogenase (Complex I) that is believed to belong to the minimal assembly required for catalysis. Complex I functions in the transfer of electrons from NADH to the respiratory chain. The immediate electron acceptor for the enzyme is believed to be ubiquinone. The polypeptide is NADH-ubiquinone oxidoreductase chain 4L (mt:ND4L) (Anopheles gambiae (African malaria mosquito)).